The primary structure comprises 378 residues: Ribosomal RNA large subunit methyltransferase G (378 aa).

The protein belongs to the methyltransferase superfamily. RlmG family.

The protein resides in the cytoplasm. The catalysed reaction is guanosine(1835) in 23S rRNA + S-adenosyl-L-methionine = N(2)-methylguanosine(1835) in 23S rRNA + S-adenosyl-L-homocysteine + H(+). In terms of biological role, specifically methylates the guanine in position 1835 (m2G1835) of 23S rRNA. In Shigella boydii serotype 4 (strain Sb227), this protein is Ribosomal RNA large subunit methyltransferase G.